A 265-amino-acid polypeptide reads, in one-letter code: Tetrapyrrole-binding protein, chloroplastic (265 aa).

The disordered stretch occupies residues 1–24 (MATTNSLHHHHHSSPSYTHHRNNL). A chloroplast-targeting transit peptide spans 1 to 69 (MATTNSLHHH…TAVSAVSTTN (69 aa)). A compositionally biased stretch (basic residues) spans 7-23 (LHHHHHSSPSYTHHRNN).

In terms of assembly, interacts with CHLH, the protoporphyrin IX-binding subunit of Mg-chelatase. Monomer or extremely compact dimer.

Its subcellular location is the plastid. It localises to the chloroplast membrane. Its function is as follows. Regulates chlorophyll synthesis and plastid-to-nucleus signal transduction by binding both the product and the substrate of Mg-chelatase, an enzyme that produces magnesium-protoporphyrin IX (Mg-Proto). Also activates Mg-chelatase. Neither binds abscisic acid (ABA) nor is involved in ABA signaling. The polypeptide is Tetrapyrrole-binding protein, chloroplastic (GUN4) (Arabidopsis thaliana (Mouse-ear cress)).